We begin with the raw amino-acid sequence, 607 residues long: Dolichyl-diphosphooligosaccharide--protein glycosyltransferase subunit 1 (607 aa).

A signal peptide spans 1–24; that stretch reads MEVPTARLLLLLLLGAWAPAPESA. Over 25–434 the chain is Lumenal; it reads SPEAPLLVNE…VVHYTFNKVL (410 aa). At lysine 187 the chain carries N6-acetyllysine. A glycan (N-linked (GlcNAc...) asparagine) is linked at asparagine 299. A helical transmembrane segment spans residues 435–455; it reads MLQEPLLVVAAFYILFFTVII. Residues 456–607 are Cytoplasmic-facing; the sequence is YVRLDFSITK…TKIDHILDAL (152 aa). Lysine 538 is modified (N6-acetyllysine; alternate). Lysine 538 participates in a covalent cross-link: Glycyl lysine isopeptide (Lys-Gly) (interchain with G-Cter in SUMO2); alternate.

It belongs to the OST1 family. Component of the oligosaccharyltransferase (OST) complex. OST exists in two different complex forms which contain common core subunits RPN1, RPN2, OST48, OST4, DAD1 and TMEM258, either STT3A or STT3B as catalytic subunits, and form-specific accessory subunits. STT3A complex assembly occurs through the formation of 3 subcomplexes. Subcomplex 1 contains RPN1 and TMEM258, subcomplex 2 contains the STT3A-specific subunits STT3A, DC2/OSTC, and KCP2 as well as the core subunit OST4, and subcomplex 3 contains RPN2, DAD1, and OST48. The STT3A complex can form stable complexes with the Sec61 complex or with both the Sec61 and TRAP complexes. Interacts with TMEM35A/NACHO. In terms of processing, ubiquitinated by the ECS(ASB11) complex. Ufmylated by UFL1 in response to endoplasmic reticulum stress, promoting reticulophagy of endoplasmic reticulum sheets.

It localises to the endoplasmic reticulum membrane. It functions in the pathway protein modification; protein glycosylation. In terms of biological role, subunit of the oligosaccharyl transferase (OST) complex that catalyzes the initial transfer of a defined glycan (Glc(3)Man(9)GlcNAc(2) in eukaryotes) from the lipid carrier dolichol-pyrophosphate to an asparagine residue within an Asn-X-Ser/Thr consensus motif in nascent polypeptide chains, the first step in protein N-glycosylation. N-glycosylation occurs cotranslationally and the complex associates with the Sec61 complex at the channel-forming translocon complex that mediates protein translocation across the endoplasmic reticulum (ER). All subunits are required for a maximal enzyme activity. This chain is Dolichyl-diphosphooligosaccharide--protein glycosyltransferase subunit 1, found in Canis lupus familiaris (Dog).